We begin with the raw amino-acid sequence, 378 residues long: Filamin-binding LIM protein 1 (378 aa).

Positions 1 to 69 (MASKPEKRVA…RSWMPPGRAA (69 aa)) are filamin-binding. Residues 38–179 (WPGRPWESAP…PPPEEPVSFP (142 aa)) are disordered. Over residues 103–115 (LPPPPPPPAADLP) the composition is skewed to pro residues. LIM zinc-binding domains are found at residues 186–247 (DICA…TLEK), 248–305 (CGKC…RKFA), and 306–375 (PVCS…RSAA). A PLEKHC1-binding region spans residues 281 to 378 (IGDESFALDS…HVKRSAAGCC (98 aa)).

As to quaternary structure, interacts with PLEKHC1, FLNA, FLNB and FLNC. Interacts with NKX2-5.

It is found in the cell junction. Its subcellular location is the focal adhesion. The protein resides in the cytoplasm. The protein localises to the cytoskeleton. It localises to the stress fiber. Serves as an anchoring site for cell-ECM adhesion proteins and filamin-containing actin filaments. Is implicated in cell shape modulation (spreading) and motility. May participate in the regulation of filamin-mediated cross-linking and stabilization of actin filaments. May also regulate the assembly of filamin-containing signaling complexes that control actin assembly. Promotes dissociation of FLNA from ITGB3 and ITGB7. Promotes activation of integrins and regulates integrin-mediated cell-cell adhesion. In Bos taurus (Bovine), this protein is Filamin-binding LIM protein 1 (FBLIM1).